The chain runs to 87 residues: Small ribosomal subunit protein uS15 (87 aa).

This sequence belongs to the universal ribosomal protein uS15 family. Part of the 30S ribosomal subunit. Forms a bridge to the 50S subunit in the 70S ribosome, contacting the 23S rRNA.

Functionally, one of the primary rRNA binding proteins, it binds directly to 16S rRNA where it helps nucleate assembly of the platform of the 30S subunit by binding and bridging several RNA helices of the 16S rRNA. In terms of biological role, forms an intersubunit bridge (bridge B4) with the 23S rRNA of the 50S subunit in the ribosome. The polypeptide is Small ribosomal subunit protein uS15 (Alkaliphilus oremlandii (strain OhILAs) (Clostridium oremlandii (strain OhILAs))).